The following is a 115-amino-acid chain: ESX-1 secretion-associated protein EspL (115 aa).

The protein is ESX-1 secretion-associated protein EspL of Mycobacterium tuberculosis (strain CDC 1551 / Oshkosh).